The chain runs to 374 residues: MGEIIHRSKTRPVRVGPLTIGGSNEVIIQSMTTTKTHDVEATVAQIHRLEEAGCQIVRVACPDERAAEAIPEIKKRINIPLVADIHFDYKLALKAIEGGVDKIRINPGNIGRREKVEAVVKAAKERGVPIRIGVNAGSLEKRILEKYGYPTADGMVESALYHIRILEELDFHDIIVSLKASDVRLAIEAYEKAARTFDYPLHVGITEAGTLFSGTIKSAVGLGAILSKGIGNTIRVSLSADPVEEVKVAREILKTFGLASNAATLISCPTCGRIEIDLIRIANEIEDYIAKIQAPIKVAVLGCAVNGPGEAREADIGIAGARGEGLLFRHGKIVRKVPEEQMVEELKKEIDKLAEEYFAKQKENKAALKGSAAQ.

The [4Fe-4S] cluster site is built by cysteine 268, cysteine 271, cysteine 303, and glutamate 310.

This sequence belongs to the IspG family. Requires [4Fe-4S] cluster as cofactor.

It catalyses the reaction (2E)-4-hydroxy-3-methylbut-2-enyl diphosphate + oxidized [flavodoxin] + H2O + 2 H(+) = 2-C-methyl-D-erythritol 2,4-cyclic diphosphate + reduced [flavodoxin]. It functions in the pathway isoprenoid biosynthesis; isopentenyl diphosphate biosynthesis via DXP pathway; isopentenyl diphosphate from 1-deoxy-D-xylulose 5-phosphate: step 5/6. Converts 2C-methyl-D-erythritol 2,4-cyclodiphosphate (ME-2,4cPP) into 1-hydroxy-2-methyl-2-(E)-butenyl 4-diphosphate. The sequence is that of 4-hydroxy-3-methylbut-2-en-1-yl diphosphate synthase (flavodoxin) from Geobacillus kaustophilus (strain HTA426).